The following is a 372-amino-acid chain: Glutamate 5-kinase (372 aa).

K14 is a binding site for ATP. The substrate site is built by S54, D141, and N153. An ATP-binding site is contributed by 173–174 (TD). One can recognise a PUA domain in the interval 280 to 358 (RGHVVIDAGA…GEIETVLGYM (79 aa)).

The protein belongs to the glutamate 5-kinase family.

It is found in the cytoplasm. It catalyses the reaction L-glutamate + ATP = L-glutamyl 5-phosphate + ADP. The protein operates within amino-acid biosynthesis; L-proline biosynthesis; L-glutamate 5-semialdehyde from L-glutamate: step 1/2. Its function is as follows. Catalyzes the transfer of a phosphate group to glutamate to form L-glutamate 5-phosphate. The protein is Glutamate 5-kinase of Burkholderia mallei (strain NCTC 10229).